The following is a 247-amino-acid chain: UPF0273 protein PH0284 (247 aa).

One can recognise a KaiC domain in the interval Arg-3–Leu-247. Residue Gly-30–Thr-37 participates in ATP binding.

It belongs to the UPF0273 family.

The polypeptide is UPF0273 protein PH0284 (Pyrococcus horikoshii (strain ATCC 700860 / DSM 12428 / JCM 9974 / NBRC 100139 / OT-3)).